The sequence spans 146 residues: Large ribosomal subunit protein bL21 (146 aa).

Residues 103–146 (DGKSPTIGPRPKKEKAVEPVEGASDDKPRRAAKKTAAKTAEDAD) are disordered. Over residues 116-131 (EKAVEPVEGASDDKPR) the composition is skewed to basic and acidic residues.

Belongs to the bacterial ribosomal protein bL21 family. As to quaternary structure, part of the 50S ribosomal subunit. Contacts protein L20.

This protein binds to 23S rRNA in the presence of protein L20. The polypeptide is Large ribosomal subunit protein bL21 (Nitrobacter winogradskyi (strain ATCC 25391 / DSM 10237 / CIP 104748 / NCIMB 11846 / Nb-255)).